Consider the following 757-residue polypeptide: Xaa-Pro dipeptidyl-peptidase (757 aa).

Catalysis depends on charge relay system residues Ser-348, Asp-468, and His-498.

This sequence belongs to the peptidase S15 family. In terms of assembly, homodimer.

Its subcellular location is the cytoplasm. It catalyses the reaction Hydrolyzes Xaa-Pro-|- bonds to release unblocked, N-terminal dipeptides from substrates including Ala-Pro-|-p-nitroanilide and (sequentially) Tyr-Pro-|-Phe-Pro-|-Gly-Pro-|-Ile.. Removes N-terminal dipeptides sequentially from polypeptides having unsubstituted N-termini provided that the penultimate residue is proline. The sequence is that of Xaa-Pro dipeptidyl-peptidase from Streptococcus pneumoniae (strain ATCC BAA-255 / R6).